Consider the following 220-residue polypeptide: Small ribosomal subunit protein uS5 (220 aa).

Residues 1–39 (MAEQPAGQAGTTDNRDARGDREGRRRDSGRGSRERDGEK) form a disordered region. The span at 13-39 (DNRDARGDREGRRRDSGRGSRERDGEK) shows a compositional bias: basic and acidic residues. One can recognise an S5 DRBM domain in the interval 42-105 (YLERVVAINR…EEARKSFFRV (64 aa)).

The protein belongs to the universal ribosomal protein uS5 family. As to quaternary structure, part of the 30S ribosomal subunit. Contacts proteins S4 and S8.

With S4 and S12 plays an important role in translational accuracy. Functionally, located at the back of the 30S subunit body where it stabilizes the conformation of the head with respect to the body. In Mycobacterium bovis (strain ATCC BAA-935 / AF2122/97), this protein is Small ribosomal subunit protein uS5.